The chain runs to 368 residues: Phosphate acyltransferase (368 aa).

Positions Ala334–Thr368 are disordered.

This sequence belongs to the PlsX family. In terms of assembly, homodimer. Probably interacts with PlsY.

It is found in the cytoplasm. The catalysed reaction is a fatty acyl-[ACP] + phosphate = an acyl phosphate + holo-[ACP]. It functions in the pathway lipid metabolism; phospholipid metabolism. Catalyzes the reversible formation of acyl-phosphate (acyl-PO(4)) from acyl-[acyl-carrier-protein] (acyl-ACP). This enzyme utilizes acyl-ACP as fatty acyl donor, but not acyl-CoA. The sequence is that of Phosphate acyltransferase from Burkholderia thailandensis (strain ATCC 700388 / DSM 13276 / CCUG 48851 / CIP 106301 / E264).